The sequence spans 214 residues: Nascent polypeptide-associated complex subunit alpha (214 aa).

Disordered regions lie at residues 1–57 (MSNP…NEKK) and 119–179 (ASAA…EDKD). Over residues 22–38 (AEDEGSDSSDSEGEGEV) the composition is skewed to acidic residues. The 66-residue stretch at 52–117 (SRNEKKARKS…AKIEDLNSQA (66 aa)) folds into the NAC-A/B domain. Low complexity predominate over residues 119–128 (ASAAAQLAAQ). A compositionally biased stretch (basic and acidic residues) spans 129–159 (ESHDHAGHDHSGHDHSHDHGKGKAVDTGDEK). Positions 160 to 171 (KEEEEDDTEEVD) are enriched in acidic residues. The region spanning 175–214 (LEDKDIELVMTQASVSRNKAVKALKENDNDIVNSIMALSI) is the UBA domain.

Belongs to the NAC-alpha family. As to quaternary structure, part of the nascent polypeptide-associated complex (NAC), consisting of EGD2 and EGD1. NAC associates with ribosomes via EGD1.

It is found in the cytoplasm. Its subcellular location is the nucleus. In terms of biological role, component of the nascent polypeptide-associated complex (NAC), a dynamic component of the ribosomal exit tunnel, protecting the emerging polypeptides from interaction with other cytoplasmic proteins to ensure appropriate nascent protein targeting. The NAC complex also promotes mitochondrial protein import by enhancing productive ribosome interactions with the outer mitochondrial membrane and blocks the inappropriate interaction of ribosomes translating non-secretory nascent polypeptides with translocation sites in the membrane of the endoplasmic reticulum. EGD2 may also be involved in transcription regulation. This chain is Nascent polypeptide-associated complex subunit alpha (egd2), found in Sclerotinia sclerotiorum (strain ATCC 18683 / 1980 / Ss-1) (White mold).